Reading from the N-terminus, the 327-residue chain is Phosphate acyltransferase (327 aa).

It belongs to the PlsX family. In terms of assembly, homodimer. Probably interacts with PlsY.

The protein resides in the cytoplasm. The catalysed reaction is a fatty acyl-[ACP] + phosphate = an acyl phosphate + holo-[ACP]. The protein operates within lipid metabolism; phospholipid metabolism. In terms of biological role, catalyzes the reversible formation of acyl-phosphate (acyl-PO(4)) from acyl-[acyl-carrier-protein] (acyl-ACP). This enzyme utilizes acyl-ACP as fatty acyl donor, but not acyl-CoA. The sequence is that of Phosphate acyltransferase from Mycoplasma mobile (strain ATCC 43663 / 163K / NCTC 11711) (Mesomycoplasma mobile).